A 275-amino-acid polypeptide reads, in one-letter code: Voltage-dependent calcium channel gamma-5 subunit (275 aa).

Transmembrane regions (helical) follow at residues 8–28, 103–123, 129–149, and 181–201; these read ALTL…GIAV, FPLV…IGHI, ILAF…VVGL, and FAAI…YLFM.

This sequence belongs to the PMP-22/EMP/MP20 family. CACNG subfamily. In terms of assembly, the L-type calcium channel is composed of five subunits: alpha-1, alpha-2/delta, beta and gamma. Acts as an auxiliary subunit for AMPA-selective glutamate receptors (AMPARs). Found in a complex with GRIA1, GRIA2, GRIA3, GRIA4, CNIH2, CNIH3, CACNG2, CACNG3, CACNG4, CACNG7 and CACNG8. Interacts with GRIA1, GRIA2, GRIA3 and GRIA4. Brain. Enriched in Bergman glia, as well as a variety of neuronal populations including locus coeruleus, olfactory bulb, lateral septal nucleus, interpeduncular nucleus, and the CA2 and rostral/medial CA1 regions of hippocampus.

The protein localises to the membrane. Its subcellular location is the postsynaptic density membrane. Regulates the gating properties of AMPA-selective glutamate receptors (AMPARs). Modulates their gating properties by accelerating their rates of activation, deactivation and desensitization. Displays subunit-specific AMPA receptor regulation. Shows specificity for GRIA1, GRIA4 and the long isoform of GRIA2. Thought to stabilize the calcium channel in an inactivated (closed) state. The polypeptide is Voltage-dependent calcium channel gamma-5 subunit (Cacng5) (Mus musculus (Mouse)).